Consider the following 493-residue polypeptide: Monodehydroascorbate reductase, chloroplastic/mitochondrial (493 aa).

The transit peptide at 1–51 directs the protein to the chloroplast and mitochondrion; sequence MSAVRRVMALASTTLPTKSGLSLWCPSSPSLARRFPARFSPIGSRIASRSL. Residues 68-71, glutamate 95, arginine 102, lysine 107, and 201-202 contribute to the FAD site; these read GGNA and RE. NAD(+) contacts are provided by residues 224–230, glutamate 248, arginine 254, and glycine 313; that span reads GGYIGME. 226-230 provides a ligand contact to NADP(+); it reads YIGME. Residues arginine 254 and glycine 313 each contribute to the NADP(+) site. Aspartate 351 provides a ligand contact to FAD. An NAD(+)-binding site is contributed by 367-368; it reads EH. 367-368 provides a ligand contact to NADP(+); the sequence is EH. Valine 369 contacts FAD. Arginine 373 lines the L-ascorbate pocket. Tyrosine 398 contacts FAD. Tyrosine 398 contacts NAD(+). Tyrosine 398 serves as a coordination point for NADP(+). Arginine 400 provides a ligand contact to L-ascorbate.

The protein belongs to the FAD-dependent oxidoreductase family. As to quaternary structure, interacts in vitro with TRXy. It depends on FAD as a cofactor.

It localises to the plastid. The protein localises to the chloroplast. It is found in the mitochondrion. The catalysed reaction is 2 monodehydro-L-ascorbate radical + NADH + H(+) = 2 L-ascorbate + NAD(+). It carries out the reaction 2,4,6-trinitrotoluene + NADH = 2,4,6-trinitrotoluene radical + e(-) + NAD(+). Its activity is regulated as follows. Redox regulation of the activity by thioredoxin TRXy1. Functionally, catalyzes the conversion of monodehydroascorbate (MDA) to ascorbate, oxidizing NADH in the process. Mediates phytotoxicity of 2,4,6-trinitrotoluene (TNT), an explosive and environmental pollutant, by reducing TNT and forming a nitro radical that spontaneously reacts with atmospheric oxygen, generating reactive superoxide. Can also use 1-chloro-2,4-dinitrobenzene (CDNB) as substrate, but not 1-chloro-4-nitrobenzene (CNB). This is Monodehydroascorbate reductase, chloroplastic/mitochondrial from Arabidopsis thaliana (Mouse-ear cress).